The primary structure comprises 404 residues: Riboflavin biosynthesis protein RibBA (404 aa).

Residues 1–204 (MEELKLNTIE…IRDLIAYRLK (204 aa)) are DHBP synthase. D-ribulose 5-phosphate-binding positions include 30 to 31 (RE), aspartate 35, 143 to 147 (RAGHT), and glutamate 167. Residue glutamate 31 participates in Mg(2+) binding. Histidine 146 serves as a coordination point for Mg(2+). The tract at residues 205–404 (QESLVEKGVE…RMGHTLHFNK (200 aa)) is GTP cyclohydrolase II. A GTP-binding site is contributed by 255–259 (RVHSS). Residues cysteine 260, cysteine 271, and cysteine 273 each coordinate Zn(2+). Residues glutamine 276, 298 to 300 (EGR), and threonine 320 each bind GTP. The active-site Proton acceptor; for GTP cyclohydrolase activity is the aspartate 332. The active-site Nucleophile; for GTP cyclohydrolase activity is arginine 334. 2 residues coordinate GTP: threonine 355 and lysine 360.

In the N-terminal section; belongs to the DHBP synthase family. It in the C-terminal section; belongs to the GTP cyclohydrolase II family. Mg(2+) serves as cofactor. Mn(2+) is required as a cofactor. Requires Zn(2+) as cofactor.

The catalysed reaction is D-ribulose 5-phosphate = (2S)-2-hydroxy-3-oxobutyl phosphate + formate + H(+). It catalyses the reaction GTP + 4 H2O = 2,5-diamino-6-hydroxy-4-(5-phosphoribosylamino)-pyrimidine + formate + 2 phosphate + 3 H(+). It participates in cofactor biosynthesis; riboflavin biosynthesis; 2-hydroxy-3-oxobutyl phosphate from D-ribulose 5-phosphate: step 1/1. Its pathway is cofactor biosynthesis; riboflavin biosynthesis; 5-amino-6-(D-ribitylamino)uracil from GTP: step 1/4. Functionally, catalyzes the conversion of D-ribulose 5-phosphate to formate and 3,4-dihydroxy-2-butanone 4-phosphate. In terms of biological role, catalyzes the conversion of GTP to 2,5-diamino-6-ribosylamino-4(3H)-pyrimidinone 5'-phosphate (DARP), formate and pyrophosphate. This chain is Riboflavin biosynthesis protein RibBA, found in Phocaeicola vulgatus (strain ATCC 8482 / DSM 1447 / JCM 5826 / CCUG 4940 / NBRC 14291 / NCTC 11154) (Bacteroides vulgatus).